Here is a 538-residue protein sequence, read N- to C-terminus: Probable inorganic phosphate transporter 1-4 (538 aa).

The Cytoplasmic portion of the chain corresponds to 1 to 23 (MAGELKVLNALDSAKTQWYHFTA). The helical transmembrane segment at 24-44 (IVIAGMGFFTDAYDLFSISLV) threads the bilayer. The Extracellular portion of the chain corresponds to 45–69 (TKLLGRIYYFNPASKSPGSLPPNVS). A helical membrane pass occupies residues 70–90 (AAVNGVAFCGTLAGQLFFGWL). Over 91 to 98 (GDKMGRKK) the chain is Cytoplasmic. A helical transmembrane segment spans residues 99–119 (VYGMTLMLMVICCLASGLSFG). At 120 to 123 (SSAK) the chain is on the extracellular side. A helical transmembrane segment spans residues 124–144 (GVMATLCFFRFWLGFGIGGDY). At 145–163 (PLSATIMSEYANKRTRGAF) the chain is on the cytoplasmic side. The chain crosses the membrane as a helical span at residues 164-184 (IAAVFAMQGFGNLTGGIVAII). Residues 185–210 (VSAAFKARFDAPAYRDDRAGSTVPQA) are Extracellular-facing. A helical membrane pass occupies residues 211 to 231 (DYAWRIVLMFGAIPALLTYYW). Topologically, residues 232–294 (RMKMPETARY…RQFLRRHGRH (63 aa)) are cytoplasmic. Residues 295 to 315 (LLGTTVCWFVLDIAFYSSNLF) form a helical membrane-spanning segment. The Extracellular segment spans residues 316–346 (QKDIYTAVQWLPKADTMSALEEMFKISRAQT). The helical transmembrane segment at 347 to 367 (LVALCGTIPGYWFTVFFIDII) threads the bilayer. Topologically, residues 368–369 (GR) are cytoplasmic. The helical transmembrane segment at 370 to 390 (FVIQLGGFFFMTAFMLGLAVP) threads the bilayer. Residues 391–396 (YHHWTT) are Extracellular-facing. The chain crosses the membrane as a helical span at residues 397-417 (PGNHIGFVVMYAFTFFFANFG). Residues 418–440 (PNSTTFIVPAEIFPARLRSTCHG) lie on the Cytoplasmic side of the membrane. Residues 441–461 (ISAAAGKAGAIVGSFGFLYAA) form a helical membrane-spanning segment. At 462–481 (QSTDASKTDAGYPPGIGVRN) the chain is on the extracellular side. The helical transmembrane segment at 482–502 (SLFFLAGCNVIGFFFTFLVPE) threads the bilayer. The Cytoplasmic portion of the chain corresponds to 503–538 (SKGKSLEELSGENEDDDDVPEAPSTADHRTAPAPPA). A disordered region spans residues 507 to 538 (SLEELSGENEDDDDVPEAPSTADHRTAPAPPA). Acidic residues predominate over residues 511-522 (LSGENEDDDDVP).

Belongs to the major facilitator superfamily. Phosphate:H(+) symporter (TC 2.A.1.9) family.

It is found in the membrane. High-affinity transporter for external inorganic phosphate. This chain is Probable inorganic phosphate transporter 1-4 (PHT1-4), found in Oryza sativa subsp. indica (Rice).